We begin with the raw amino-acid sequence, 277 residues long: Formamidopyrimidine-DNA glycosylase (277 aa).

The active-site Schiff-base intermediate with DNA is the Pro-2. Residue Glu-3 is the Proton donor of the active site. Lys-58 serves as the catalytic Proton donor; for beta-elimination activity. DNA contacts are provided by His-97, Arg-116, and Arg-158. The FPG-type zinc finger occupies 243–277; the sequence is NVYGRAGAPCPRCGRSIRQRRIAQRSTWYCPGCQR. Arg-267 functions as the Proton donor; for delta-elimination activity in the catalytic mechanism.

It belongs to the FPG family. Monomer. Requires Zn(2+) as cofactor.

The catalysed reaction is Hydrolysis of DNA containing ring-opened 7-methylguanine residues, releasing 2,6-diamino-4-hydroxy-5-(N-methyl)formamidopyrimidine.. It carries out the reaction 2'-deoxyribonucleotide-(2'-deoxyribose 5'-phosphate)-2'-deoxyribonucleotide-DNA = a 3'-end 2'-deoxyribonucleotide-(2,3-dehydro-2,3-deoxyribose 5'-phosphate)-DNA + a 5'-end 5'-phospho-2'-deoxyribonucleoside-DNA + H(+). Functionally, involved in base excision repair of DNA damaged by oxidation or by mutagenic agents. Acts as a DNA glycosylase that recognizes and removes damaged bases. Has a preference for oxidized purines, such as 7,8-dihydro-8-oxoguanine (8-oxoG). Has AP (apurinic/apyrimidinic) lyase activity and introduces nicks in the DNA strand. Cleaves the DNA backbone by beta-delta elimination to generate a single-strand break at the site of the removed base with both 3'- and 5'-phosphates. This is Formamidopyrimidine-DNA glycosylase from Alkalilimnicola ehrlichii (strain ATCC BAA-1101 / DSM 17681 / MLHE-1).